A 303-amino-acid polypeptide reads, in one-letter code: NAD kinase (303 aa).

Aspartate 85 serves as the catalytic Proton acceptor. Residues 85-86 (DG), arginine 90, 159-160 (ND), lysine 187, aspartate 189, alanine 224, and glutamine 259 each bind NAD(+).

The protein belongs to the NAD kinase family. It depends on a divalent metal cation as a cofactor.

It localises to the cytoplasm. It catalyses the reaction NAD(+) + ATP = ADP + NADP(+) + H(+). Its function is as follows. Involved in the regulation of the intracellular balance of NAD and NADP, and is a key enzyme in the biosynthesis of NADP. Catalyzes specifically the phosphorylation on 2'-hydroxyl of the adenosine moiety of NAD to yield NADP. The protein is NAD kinase of Bdellovibrio bacteriovorus (strain ATCC 15356 / DSM 50701 / NCIMB 9529 / HD100).